A 439-amino-acid chain; its full sequence is GTPase Der (439 aa).

EngA-type G domains lie at 2-166 (SVVA…PAPA) and 176-351 (TRLA…IEFN). Residues 8–15 (GRPNVGKS), 55–59 (DTGGF), 118–121 (NKVD), 182–189 (GRPNVGKS), 229–233 (DTAGI), and 294–297 (NKWD) contribute to the GTP site. One can recognise a KH-like domain in the interval 352 to 436 (RQVPTGVLNR…PIRLKFKDRN (85 aa)).

Belongs to the TRAFAC class TrmE-Era-EngA-EngB-Septin-like GTPase superfamily. EngA (Der) GTPase family. Associates with the 50S ribosomal subunit.

Functionally, GTPase that plays an essential role in the late steps of ribosome biogenesis. The polypeptide is GTPase Der (Syntrophotalea carbinolica (strain DSM 2380 / NBRC 103641 / GraBd1) (Pelobacter carbinolicus)).